The following is a 500-amino-acid chain: Protein nucleotidyltransferase YdiU (500 aa).

Positions 98, 100, 101, 124, 136, 137, 187, and 194 each coordinate ATP. The active-site Proton acceptor is the D263. Mg(2+)-binding residues include N264 and D273. ATP is bound at residue D273.

The protein belongs to the SELO family. Requires Mg(2+) as cofactor. Mn(2+) is required as a cofactor.

The catalysed reaction is L-seryl-[protein] + ATP = 3-O-(5'-adenylyl)-L-seryl-[protein] + diphosphate. It catalyses the reaction L-threonyl-[protein] + ATP = 3-O-(5'-adenylyl)-L-threonyl-[protein] + diphosphate. It carries out the reaction L-tyrosyl-[protein] + ATP = O-(5'-adenylyl)-L-tyrosyl-[protein] + diphosphate. The enzyme catalyses L-histidyl-[protein] + UTP = N(tele)-(5'-uridylyl)-L-histidyl-[protein] + diphosphate. The catalysed reaction is L-seryl-[protein] + UTP = O-(5'-uridylyl)-L-seryl-[protein] + diphosphate. It catalyses the reaction L-tyrosyl-[protein] + UTP = O-(5'-uridylyl)-L-tyrosyl-[protein] + diphosphate. Nucleotidyltransferase involved in the post-translational modification of proteins. It can catalyze the addition of adenosine monophosphate (AMP) or uridine monophosphate (UMP) to a protein, resulting in modifications known as AMPylation and UMPylation. The protein is Protein nucleotidyltransferase YdiU of Herminiimonas arsenicoxydans.